The chain runs to 338 residues: Solute carrier family 35 member G4 (338 aa).

The segment at Met-1–Gln-29 is disordered. 7 helical membrane passes run Thr-37–Leu-57, Cys-160–Leu-180, Gly-190–Tyr-210, Thr-221–Leu-241, Leu-250–Val-270, Leu-281–Leu-301, and Val-305–Ala-325. The region spanning Leu-49–Gly-174 is the EamA 1 domain. The EamA 2 domain maps to Tyr-272 to Ala-325.

Belongs to the SLC35G solute transporter family.

It localises to the membrane. This chain is Solute carrier family 35 member G4 (SLC35G4), found in Homo sapiens (Human).